The following is a 471-amino-acid chain: Maintenance of mitochondrial morphology protein 1 (471 aa).

The Lumenal segment spans residues 1 to 21 (MSSPQNTSCPPSQHSLSFTQG). The chain crosses the membrane as a helical span at residues 22–42 (LLLGQLSVVLLIGAFIKFFIF). Residues 43-471 (GESPSSSSRG…GSLPGAPAVA (429 aa)) are Cytoplasmic-facing. The 243-residue stretch at 128-370 (QPESLDWFNV…EPRVQLVALP (243 aa)) folds into the SMP-LTD domain. Disordered regions lie at residues 271–306 (GTTE…GVRS), 395–415 (EDPA…NRDG), and 448–471 (RGDT…PAVA). The span at 280–295 (PHPENQNESKPSRQDP) shows a compositional bias: basic and acidic residues. Residues 401 to 410 (ATHSGFTPVN) are compositionally biased toward polar residues.

Belongs to the MMM1 family. As to quaternary structure, homodimer. Component of the ER-mitochondria encounter structure (ERMES) or MDM complex, composed of MMM1, MDM10, MDM12 and MDM34. An MMM1 homodimer associates with one molecule of MDM12 on each side in a pairwise head-to-tail manner, and the SMP-LTD domains of MMM1 and MDM12 generate a continuous hydrophobic tunnel for phospholipid trafficking.

Its subcellular location is the endoplasmic reticulum membrane. Its function is as follows. Component of the ERMES/MDM complex, which serves as a molecular tether to connect the endoplasmic reticulum (ER) and mitochondria. Components of this complex are involved in the control of mitochondrial shape and protein biogenesis, and function in nonvesicular lipid trafficking between the ER and mitochondria. The MDM12-MMM1 subcomplex functions in the major beta-barrel assembly pathway that is responsible for biogenesis of all outer membrane beta-barrel proteins, and acts in a late step after the SAM complex. The MDM10-MDM12-MMM1 subcomplex further acts in the TOM40-specific pathway after the action of the MDM12-MMM1 complex. Essential for establishing and maintaining the structure of mitochondria and maintenance of mtDNA nucleoids. This Arthroderma otae (strain ATCC MYA-4605 / CBS 113480) (Microsporum canis) protein is Maintenance of mitochondrial morphology protein 1.